The chain runs to 361 residues: Chorismate synthase (361 aa).

Residues Arg-48 and Arg-54 each contribute to the NADP(+) site. FMN contacts are provided by residues 125 to 127 (RSS), 238 to 239 (NA), Gly-278, 293 to 297 (KPTSS), and Arg-319.

The protein belongs to the chorismate synthase family. As to quaternary structure, homotetramer. It depends on FMNH2 as a cofactor.

It carries out the reaction 5-O-(1-carboxyvinyl)-3-phosphoshikimate = chorismate + phosphate. Its pathway is metabolic intermediate biosynthesis; chorismate biosynthesis; chorismate from D-erythrose 4-phosphate and phosphoenolpyruvate: step 7/7. Catalyzes the anti-1,4-elimination of the C-3 phosphate and the C-6 proR hydrogen from 5-enolpyruvylshikimate-3-phosphate (EPSP) to yield chorismate, which is the branch point compound that serves as the starting substrate for the three terminal pathways of aromatic amino acid biosynthesis. This reaction introduces a second double bond into the aromatic ring system. The protein is Chorismate synthase of Yersinia pseudotuberculosis serotype IB (strain PB1/+).